Reading from the N-terminus, the 222-residue chain is Endonuclease V (222 aa).

Mg(2+)-binding residues include D43 and D109.

This sequence belongs to the endonuclease V family. Mg(2+) is required as a cofactor.

The protein localises to the cytoplasm. It catalyses the reaction Endonucleolytic cleavage at apurinic or apyrimidinic sites to products with a 5'-phosphate.. In terms of biological role, DNA repair enzyme involved in the repair of deaminated bases. Selectively cleaves double-stranded DNA at the second phosphodiester bond 3' to a deoxyinosine leaving behind the intact lesion on the nicked DNA. The polypeptide is Endonuclease V (Roseiflexus castenholzii (strain DSM 13941 / HLO8)).